Here is a 187-residue protein sequence, read N- to C-terminus: Cytokinin riboside 5'-monophosphate phosphoribohydrolase (187 aa).

Substrate contacts are provided by residues Glu-80, 98–99, 115–121, and Thr-127; these read RK and GVGTLDE.

It belongs to the LOG family.

The catalysed reaction is N(6)-(dimethylallyl)adenosine 5'-phosphate + H2O = N(6)-dimethylallyladenine + D-ribose 5-phosphate. The enzyme catalyses 9-ribosyl-trans-zeatin 5'-phosphate + H2O = trans-zeatin + D-ribose 5-phosphate. Catalyzes the hydrolytic removal of ribose 5'-monophosphate from nitrogen N6-modified adenosines, the final step of bioactive cytokinin synthesis. In Mycobacterium marinum (strain ATCC BAA-535 / M), this protein is Cytokinin riboside 5'-monophosphate phosphoribohydrolase.